The primary structure comprises 195 residues: Translation machinery-associated protein 22 (195 aa).

The SUI1 domain maps to 94–165; the sequence is VLIKRIERNR…EAKEYIEKLL (72 aa). Residues 176–195 form a disordered region; the sequence is EQVDEKKKKKATAPGATPAA.

Belongs to the DENR family. In terms of assembly, interacts with the 40S ribosomal subunit.

The protein localises to the cytoplasm. The sequence is that of Translation machinery-associated protein 22 (TMA22) from Scheffersomyces stipitis (strain ATCC 58785 / CBS 6054 / NBRC 10063 / NRRL Y-11545) (Yeast).